We begin with the raw amino-acid sequence, 394 residues long: Methylthioribose kinase (394 aa).

Residues Asn44, Lys61, and 115 to 117 (EDL) each bind ATP. Asp233 serves as a coordination point for substrate. 250-252 (DPE) is an ATP binding site. Arg337 is a binding site for substrate.

It belongs to the methylthioribose kinase family. Homodimer.

The catalysed reaction is 5-(methylsulfanyl)-D-ribose + ATP = 5-(methylsulfanyl)-alpha-D-ribose 1-phosphate + ADP + H(+). It functions in the pathway amino-acid biosynthesis; L-methionine biosynthesis via salvage pathway; S-methyl-5-thio-alpha-D-ribose 1-phosphate from S-methyl-5'-thioadenosine (hydrolase route): step 2/2. Functionally, catalyzes the phosphorylation of methylthioribose into methylthioribose-1-phosphate. The polypeptide is Methylthioribose kinase (Bacillus velezensis (strain DSM 23117 / BGSC 10A6 / LMG 26770 / FZB42) (Bacillus amyloliquefaciens subsp. plantarum)).